Consider the following 501-residue polypeptide: L-arabinose isomerase (501 aa).

Mn(2+)-binding residues include E306, E333, H350, and H449.

This sequence belongs to the arabinose isomerase family. It depends on Mn(2+) as a cofactor.

It carries out the reaction beta-L-arabinopyranose = L-ribulose. Its pathway is carbohydrate degradation; L-arabinose degradation via L-ribulose; D-xylulose 5-phosphate from L-arabinose (bacterial route): step 1/3. Catalyzes the conversion of L-arabinose to L-ribulose. In Mycolicibacterium smegmatis (strain ATCC 700084 / mc(2)155) (Mycobacterium smegmatis), this protein is L-arabinose isomerase.